Reading from the N-terminus, the 328-residue chain is uncharacterized protein (328 aa).

The 124-residue stretch at 3–126 (RVKIGEFKFG…EVIPQVLCTG (124 aa)) folds into the Bro-N domain.

This is an uncharacterized protein from Autographa californica nuclear polyhedrosis virus (AcMNPV).